The following is a 125-amino-acid chain: N-alpha-acetyltransferase 38, NatC auxiliary subunit (125 aa).

The segment at 1–42 (MAGAGPTMLLREENGCCSRRQSSSSAGDSDGEQEDSPATRAR) is disordered. N-acetylalanine is present on alanine 2. The segment covering 18–28 (SRRQSSSSAGD) has biased composition (low complexity). Residues serine 22, serine 25, and serine 29 each carry the phosphoserine modification. A Sm domain is found at 40 to 118 (RARQQLEALL…IVSIEVQRES (79 aa)).

Belongs to the snRNP Sm proteins family. Component of the N-terminal acetyltransferase C (NatC) complex, which is composed of NAA35, NAA38 and NAA30.

Its subcellular location is the cytoplasm. The protein resides in the nucleus. Functionally, auxillary component of the N-terminal acetyltransferase C (NatC) complex which catalyzes acetylation of N-terminal methionine residues. N-terminal acetylation protects proteins from ubiquitination and degradation by the N-end rule pathway. The protein is N-alpha-acetyltransferase 38, NatC auxiliary subunit (Naa38) of Mus musculus (Mouse).